A 304-amino-acid chain; its full sequence is DCN1-like protein 3 (304 aa).

Disordered regions lie at residues 1–87 (MGQC…EESS) and 285–304 (VEGR…EEQT). Gly2 carries N-myristoyl glycine lipidation. The DCUN1 domain occupies 86–278 (SSLQRLEELF…LFDTFVEWEM (193 aa)).

Part of a complex containing DCUN1D3, CUL3 and RBX1. Interacts (via the DCUN1 domain) with the unneddylated cullins: interacts with CUL1, CUL2, CUL3, CUL4A, CUL4B and CUL5; these interactions promote the cullin neddylation and the identity of the cullin dictates the affinity of the interaction. Interacts preferentially with CUL3; this interaction triggers the relocalization of CUL3 to the cell membrane where CUL3 is neddylated. Interacts (via DCUN1 domain) with RBX1. May also interact with regulators or subunits of cullin-RING ligases such as RNF7, ELOB and DDB1; these interactions are bridged by cullins. Interacts (via DCUN1 domain) with CAND1; this interaction is bridged by cullins and strongly inhibits cullin neddylation. These CAND-cullin-DCNL complexes can only be neddylated in the presence of a substrate adapter. Interacts (via DCUN1 domain) with the N-terminally acetylated form of UBE2M and UBE2F.

The protein resides in the cell membrane. It is found in the cytoplasm. It localises to the nucleus. The protein localises to the perinuclear region. Functionally, contributes to the neddylation of all cullins by transferring NEDD8 from N-terminally acetylated NEDD8-conjugating E2s enzyme to different cullin C-terminal domain-RBX complexes and may play a role in the cell cycle progression by regulating the SCF ubiquitin E3 ligase complex, after UV damage. At the cell membrane, can promote and as well inhibit cullins neddylation. The sequence is that of DCN1-like protein 3 from Rattus norvegicus (Rat).